The primary structure comprises 464 residues: ATP synthase subunit beta (464 aa).

Gly153–Thr160 contacts ATP.

This sequence belongs to the ATPase alpha/beta chains family. F-type ATPases have 2 components, CF(1) - the catalytic core - and CF(0) - the membrane proton channel. CF(1) has five subunits: alpha(3), beta(3), gamma(1), delta(1), epsilon(1). CF(0) has three main subunits: a(1), b(2) and c(9-12). The alpha and beta chains form an alternating ring which encloses part of the gamma chain. CF(1) is attached to CF(0) by a central stalk formed by the gamma and epsilon chains, while a peripheral stalk is formed by the delta and b chains.

Its subcellular location is the cell inner membrane. The enzyme catalyses ATP + H2O + 4 H(+)(in) = ADP + phosphate + 5 H(+)(out). Its function is as follows. Produces ATP from ADP in the presence of a proton gradient across the membrane. The catalytic sites are hosted primarily by the beta subunits. This chain is ATP synthase subunit beta, found in Burkholderia cenocepacia (strain ATCC BAA-245 / DSM 16553 / LMG 16656 / NCTC 13227 / J2315 / CF5610) (Burkholderia cepacia (strain J2315)).